Consider the following 602-residue polypeptide: 4-hydroxy-3-methylbut-2-en-1-yl diphosphate synthase (flavodoxin) (602 aa).

[4Fe-4S] cluster is bound by residues Cys-508, Cys-511, Cys-543, and Glu-550.

The protein belongs to the IspG family. It depends on [4Fe-4S] cluster as a cofactor.

The enzyme catalyses (2E)-4-hydroxy-3-methylbut-2-enyl diphosphate + oxidized [flavodoxin] + H2O + 2 H(+) = 2-C-methyl-D-erythritol 2,4-cyclic diphosphate + reduced [flavodoxin]. The protein operates within isoprenoid biosynthesis; isopentenyl diphosphate biosynthesis via DXP pathway; isopentenyl diphosphate from 1-deoxy-D-xylulose 5-phosphate: step 5/6. Converts 2C-methyl-D-erythritol 2,4-cyclodiphosphate (ME-2,4cPP) into 1-hydroxy-2-methyl-2-(E)-butenyl 4-diphosphate. This Chlamydia trachomatis serovar D (strain ATCC VR-885 / DSM 19411 / UW-3/Cx) protein is 4-hydroxy-3-methylbut-2-en-1-yl diphosphate synthase (flavodoxin).